The chain runs to 85 residues: CDC42 small effector protein 2 (85 aa).

2 S-palmitoyl cysteine lipidation sites follow: cysteine 10 and cysteine 11. The CRIB domain maps to 29 to 42 (IGEPTNFVHTAHVG).

This sequence belongs to the CDC42SE/SPEC family.

The protein resides in the cytoplasm. It is found in the cytoskeleton. The protein localises to the cell membrane. Functionally, probably involved in the organization of the actin cytoskeleton by acting downstream of CDC42, inducing actin filament assembly. This is CDC42 small effector protein 2 (cdc42se2) from Danio rerio (Zebrafish).